A 256-amino-acid polypeptide reads, in one-letter code: Hydroxyacylglutathione hydrolase (256 aa).

His-53, His-55, Asp-57, His-58, His-113, Asp-130, and His-168 together coordinate Zn(2+).

Belongs to the metallo-beta-lactamase superfamily. Glyoxalase II family. In terms of assembly, monomer. The cofactor is Zn(2+).

It catalyses the reaction an S-(2-hydroxyacyl)glutathione + H2O = a 2-hydroxy carboxylate + glutathione + H(+). The protein operates within secondary metabolite metabolism; methylglyoxal degradation; (R)-lactate from methylglyoxal: step 2/2. Thiolesterase that catalyzes the hydrolysis of S-D-lactoyl-glutathione to form glutathione and D-lactic acid. The polypeptide is Hydroxyacylglutathione hydrolase (Tolumonas auensis (strain DSM 9187 / NBRC 110442 / TA 4)).